Here is a 131-residue protein sequence, read N- to C-terminus: D-ribose pyranase (131 aa).

His-20 acts as the Proton donor in catalysis. Substrate-binding positions include Asp-28, His-98, and Phe-120–Asn-122.

The protein belongs to the RbsD / FucU family. RbsD subfamily. As to quaternary structure, homodecamer.

The protein resides in the cytoplasm. It carries out the reaction beta-D-ribopyranose = beta-D-ribofuranose. It functions in the pathway carbohydrate metabolism; D-ribose degradation; D-ribose 5-phosphate from beta-D-ribopyranose: step 1/2. Functionally, catalyzes the interconversion of beta-pyran and beta-furan forms of D-ribose. The chain is D-ribose pyranase from Oenococcus oeni (strain ATCC BAA-331 / PSU-1).